Reading from the N-terminus, the 201-residue chain is Recombination protein RecR (201 aa).

The segment at 60-75 (CSRCFHFTDAEECSIC) adopts a C4-type zinc-finger fold. The region spanning 83–178 (GEICVVETTA…RVSRIAYGIP (96 aa)) is the Toprim domain.

The protein belongs to the RecR family.

May play a role in DNA repair. It seems to be involved in an RecBC-independent recombinational process of DNA repair. It may act with RecF and RecO. The chain is Recombination protein RecR from Syntrophobacter fumaroxidans (strain DSM 10017 / MPOB).